The chain runs to 487 residues: Glutamate--tRNA ligase (487 aa).

Positions Pro-11–Asn-21 match the 'HIGH' region motif. Zn(2+)-binding residues include Cys-108, Cys-110, Cys-135, and Asp-137. Positions Lys-245 to Arg-249 match the 'KMSKS' region motif. Lys-248 lines the ATP pocket.

It belongs to the class-I aminoacyl-tRNA synthetase family. Glutamate--tRNA ligase type 1 subfamily. In terms of assembly, monomer. Zn(2+) is required as a cofactor.

Its subcellular location is the cytoplasm. The enzyme catalyses tRNA(Glu) + L-glutamate + ATP = L-glutamyl-tRNA(Glu) + AMP + diphosphate. In terms of biological role, catalyzes the attachment of glutamate to tRNA(Glu) in a two-step reaction: glutamate is first activated by ATP to form Glu-AMP and then transferred to the acceptor end of tRNA(Glu). This chain is Glutamate--tRNA ligase, found in Dehalococcoides mccartyi (strain CBDB1).